The sequence spans 305 residues: Cytochrome c biogenesis protein CcsA (305 aa).

The next 8 membrane-spanning stretches (helical) occupy residues 11–31 (GLGF…FWAV), 37–57 (TGIV…QLVL), 63–83 (GHFP…ACTL), 96–116 (IVAA…SFAL), 141–161 (VIMV…AVLL), 212–232 (TITV…VWAN), 246–263 (TWAL…HTRL), and 275–295 (VAVV…LLGI).

Belongs to the CcmF/CycK/Ccl1/NrfE/CcsA family. In terms of assembly, may interact with ccs1.

The protein localises to the cellular thylakoid membrane. In terms of biological role, required during biogenesis of c-type cytochromes (cytochrome c6 and cytochrome f) at the step of heme attachment. This is Cytochrome c biogenesis protein CcsA from Parasynechococcus marenigrum (strain WH8102).